A 224-amino-acid polypeptide reads, in one-letter code: 7-cyano-7-deazaguanine synthase (224 aa).

Residue 10-20 participates in ATP binding; sequence VSGGLDSATVL. The Zn(2+) site is built by cysteine 189, cysteine 199, cysteine 202, and cysteine 205.

The protein belongs to the QueC family. Zn(2+) is required as a cofactor.

It carries out the reaction 7-carboxy-7-deazaguanine + NH4(+) + ATP = 7-cyano-7-deazaguanine + ADP + phosphate + H2O + H(+). It participates in purine metabolism; 7-cyano-7-deazaguanine biosynthesis. In terms of biological role, catalyzes the ATP-dependent conversion of 7-carboxy-7-deazaguanine (CDG) to 7-cyano-7-deazaguanine (preQ(0)). In Nitrosococcus oceani (strain ATCC 19707 / BCRC 17464 / JCM 30415 / NCIMB 11848 / C-107), this protein is 7-cyano-7-deazaguanine synthase.